Here is a 40-residue protein sequence, read N- to C-terminus: ATYNIKLITPEGTKEITCSDSEYILDAAEEKGLDLPYSCR.

Positions 3 to 40 (YNIKLITPEGTKEITCSDSEYILDAAEEKGLDLPYSCR) constitute a 2Fe-2S ferredoxin-type domain. [2Fe-2S] cluster is bound at residue C39.

It belongs to the 2Fe2S plant-type ferredoxin family. [2Fe-2S] cluster serves as cofactor.

The protein localises to the plastid. It is found in the chloroplast. In terms of biological role, ferredoxins are iron-sulfur proteins that transfer electrons in a wide variety of metabolic reactions. In Pisum sativum (Garden pea), this protein is Ferredoxin-2.